A 647-amino-acid polypeptide reads, in one-letter code: Macrolide export ATP-binding/permease protein MacB 2 (647 aa).

One can recognise an ABC transporter domain in the interval 6-244 (IQLKGIERRY…VTPTAAPAGK (239 aa)). 42 to 49 (GASGSGKS) lines the ATP pocket. Residues 223-247 (QEDSGRKPAAVPVTPTAAPAGKEGV) form a disordered region. Over residues 230–242 (PAAVPVTPTAAPA) the composition is skewed to low complexity. 4 helical membrane-spanning segments follow: residues 273–293 (FLTM…VALG), 527–547 (IAVI…LVSV), 581–601 (LGGM…SLFV), and 610–630 (LFSI…FGYL).

It belongs to the ABC transporter superfamily. Macrolide exporter (TC 3.A.1.122) family. In terms of assembly, homodimer. Part of the tripartite efflux system MacAB-TolC, which is composed of an inner membrane transporter, MacB, a periplasmic membrane fusion protein, MacA, and an outer membrane component, TolC. The complex forms a large protein conduit and can translocate molecules across both the inner and outer membranes. Interacts with MacA.

Its subcellular location is the cell inner membrane. Part of the tripartite efflux system MacAB-TolC. MacB is a non-canonical ABC transporter that contains transmembrane domains (TMD), which form a pore in the inner membrane, and an ATP-binding domain (NBD), which is responsible for energy generation. Confers resistance against macrolides. This Aeromonas hydrophila subsp. hydrophila (strain ATCC 7966 / DSM 30187 / BCRC 13018 / CCUG 14551 / JCM 1027 / KCTC 2358 / NCIMB 9240 / NCTC 8049) protein is Macrolide export ATP-binding/permease protein MacB 2.